The primary structure comprises 161 residues: Short form salivary protein D7S (161 aa).

Residues 1–18 form the signal peptide; that stretch reads MKFPSILLAILLFKPITA. 3 cysteine pairs are disulfide-bonded: Cys-33–Cys-67, Cys-47–Cys-155, and Cys-109–Cys-125.

It belongs to the PBP/GOBP family.

The protein localises to the secreted. Functionally, in contrast to the related D7 salivary proteins, does not bind serotonin. This is Short form salivary protein D7S from Culex quinquefasciatus (Southern house mosquito).